The primary structure comprises 196 residues: MPIGVPKVPFRNPGEEDAVWVDVYNRLYRERLLFLGQEVDSEISNQLIGLMVYLSIENDTKDLYLFINSPGGWVIPGVAIYDTMQFVQPDVHTICMGLAASMGSFLLAGGEITKRLAFPHARVMIHQPASSFYEAQTGEFILEAEELLKLRESLTRVYVQRTGKPLWVVSEDMERNVFMSATEAQAHGIVDLVAVK.

Ser101 serves as the catalytic Nucleophile. Residue His126 is part of the active site.

Belongs to the peptidase S14 family. As to quaternary structure, component of the chloroplastic Clp protease core complex.

It is found in the plastid. It localises to the chloroplast stroma. It catalyses the reaction Hydrolysis of proteins to small peptides in the presence of ATP and magnesium. alpha-casein is the usual test substrate. In the absence of ATP, only oligopeptides shorter than five residues are hydrolyzed (such as succinyl-Leu-Tyr-|-NHMec, and Leu-Tyr-Leu-|-Tyr-Trp, in which cleavage of the -Tyr-|-Leu- and -Tyr-|-Trp bonds also occurs).. Functionally, cleaves peptides in various proteins in a process that requires ATP hydrolysis. Has a chymotrypsin-like activity. Plays a major role in the degradation of misfolded proteins. This chain is ATP-dependent Clp protease proteolytic subunit, found in Gossypium barbadense (Sea Island cotton).